Reading from the N-terminus, the 171-residue chain is O-acetyl-ADP-ribose deacetylase 1 (171 aa).

The region spanning Met-1–Asn-171 is the Macro domain. Substrate is bound by residues Asp-10–Ile-11, Asn-24, Gly-32–Asp-34, and Ser-121–Tyr-125. Asp-34 functions as the Proton acceptor in the catalytic mechanism.

The protein belongs to the MacroD-type family. YmdB subfamily. In terms of assembly, homodimer. Interacts with RNase III.

It catalyses the reaction 3''-O-acetyl-ADP-D-ribose + H2O = ADP-D-ribose + acetate + H(+). The enzyme catalyses 2''-O-acetyl-ADP-D-ribose + H2O = ADP-D-ribose + acetate + H(+). In terms of biological role, deacetylates O-acetyl-ADP ribose to yield ADP-ribose and free acetate. Down-regulates ribonuclease 3 (RNase III) activity. Acts by interacting directly with the region of the ribonuclease that is required for dimerization/activation. The sequence is that of O-acetyl-ADP-ribose deacetylase 1 from Pantoea vagans (strain C9-1) (Pantoea agglomerans (strain C9-1)).